Reading from the N-terminus, the 290-residue chain is Porphobilinogen deaminase (290 aa).

At Cys238 the chain carries S-(dipyrrolylmethanemethyl)cysteine.

It belongs to the HMBS family. As to quaternary structure, monomer. It depends on dipyrromethane as a cofactor.

The enzyme catalyses 4 porphobilinogen + H2O = hydroxymethylbilane + 4 NH4(+). The protein operates within porphyrin-containing compound metabolism; protoporphyrin-IX biosynthesis; coproporphyrinogen-III from 5-aminolevulinate: step 2/4. Functionally, tetrapolymerization of the monopyrrole PBG into the hydroxymethylbilane pre-uroporphyrinogen in several discrete steps. This chain is Porphobilinogen deaminase, found in Caldicellulosiruptor saccharolyticus (strain ATCC 43494 / DSM 8903 / Tp8T 6331).